Here is a 63-residue protein sequence, read N- to C-terminus: Large ribosomal subunit protein eL37 (63 aa).

Zn(2+)-binding residues include C20, C23, C35, and C38. Residues 20 to 38 (CRRCGHHSFNVRKGYCAHC) form a C4-type zinc finger.

Belongs to the eukaryotic ribosomal protein eL37 family. The cofactor is Zn(2+).

Functionally, binds to the 23S rRNA. This chain is Large ribosomal subunit protein eL37, found in Thermofilum pendens (strain DSM 2475 / Hrk 5).